Reading from the N-terminus, the 404-residue chain is 8-amino-7-oxononanoate synthase (404 aa).

Arg-20 serves as a coordination point for substrate. Residue 116-117 coordinates pyridoxal 5'-phosphate; sequence GY. Substrate is bound at residue His-141. Positions 187, 215, and 243 each coordinate pyridoxal 5'-phosphate. The residue at position 246 (Lys-246) is an N6-(pyridoxal phosphate)lysine. Thr-366 contributes to the substrate binding site.

This sequence belongs to the class-II pyridoxal-phosphate-dependent aminotransferase family. BioF subfamily. In terms of assembly, homodimer. Requires pyridoxal 5'-phosphate as cofactor.

It catalyses the reaction 6-carboxyhexanoyl-[ACP] + L-alanine + H(+) = (8S)-8-amino-7-oxononanoate + holo-[ACP] + CO2. The protein operates within cofactor biosynthesis; biotin biosynthesis. Functionally, catalyzes the decarboxylative condensation of pimeloyl-[acyl-carrier protein] and L-alanine to produce 8-amino-7-oxononanoate (AON), [acyl-carrier protein], and carbon dioxide. The chain is 8-amino-7-oxononanoate synthase from Cupriavidus necator (strain ATCC 17699 / DSM 428 / KCTC 22496 / NCIMB 10442 / H16 / Stanier 337) (Ralstonia eutropha).